The following is a 106-amino-acid chain: N(2)-fixation sustaining protein CowN (106 aa).

Belongs to the CowN family.

Is required to sustain N(2)-dependent growth in the presence of low levels of carbon monoxide (CO). Probably acts by protecting the N(2) fixation ability of the nitrogenase complex, which is inactivated in the presence of CO. This Denitrovibrio acetiphilus (strain DSM 12809 / NBRC 114555 / N2460) protein is N(2)-fixation sustaining protein CowN.